Reading from the N-terminus, the 476-residue chain is Probable rhodanese domain-containing dual specificity protein phosphatase (476 aa).

Residues 32 to 190 form the Rhodanese domain; sequence IGSSKIIIDL…FQKDYSFMCN (159 aa). Residues 208-350 enclose the Tyrosine-protein phosphatase domain; the sequence is YPSEIIKDFL…LKDYQQHLTL (143 aa). Residue cysteine 294 is the Phosphocysteine intermediate of the active site. Positions 425 to 436 are enriched in low complexity; that stretch reads KTTTSSTTINNK. Residues 425–476 form a disordered region; the sequence is KTTTSSTTINNKGQQQDKAQEEKDSIFSYADKQEKMTHPTLHSPIELPQSSL. The segment covering 442 to 461 has biased composition (basic and acidic residues); that stretch reads KAQEEKDSIFSYADKQEKMT.

It belongs to the protein-tyrosine phosphatase family. Non-receptor class dual specificity subfamily.

It carries out the reaction O-phospho-L-tyrosyl-[protein] + H2O = L-tyrosyl-[protein] + phosphate. It catalyses the reaction O-phospho-L-seryl-[protein] + H2O = L-seryl-[protein] + phosphate. The catalysed reaction is O-phospho-L-threonyl-[protein] + H2O = L-threonyl-[protein] + phosphate. Its function is as follows. Has a dual specificity toward Ser/Thr and Tyr-containing proteins. This chain is Probable rhodanese domain-containing dual specificity protein phosphatase, found in Dictyostelium discoideum (Social amoeba).